A 78-amino-acid polypeptide reads, in one-letter code: Short neurotoxin 342 (78 aa).

The signal sequence occupies residues 1–21 (MKTLLLTLVVLTIVCLDLGYT). 4 disulfide bridges follow: Cys-24–Cys-43, Cys-38–Cys-57, Cys-59–Cys-70, and Cys-71–Cys-76.

The protein belongs to the three-finger toxin family. Short-chain subfamily. Type I alpha-neurotoxin sub-subfamily. In terms of tissue distribution, expressed by the venom gland.

Its subcellular location is the secreted. Functionally, binds to muscle nicotinic acetylcholine receptor (nAChR) and inhibit acetylcholine from binding to the receptor, thereby impairing neuromuscular transmission. This is Short neurotoxin 342 from Drysdalia coronoides (White-lipped snake).